The sequence spans 756 residues: NUT family member 2F (756 aa).

4 disordered regions span residues 173-200 (GNAR…PDDS), 293-438 (IQKS…TSDP), 511-639 (RAAP…LPGM), and 653-756 (RLSQ…HCSQ). Residues 304-321 (SLPPPAPPRLEPRGPPAP) are compositionally biased toward pro residues. A compositionally biased stretch (basic and acidic residues) spans 417–427 (EGQREKGKVEQ). The span at 543 to 560 (QRVSVETSPPQTAAQDPQ) shows a compositional bias: polar residues. Residues 654–665 (LSQSPVPSSGLL) show a composition bias toward low complexity. A compositionally biased stretch (basic residues) spans 746 to 756 (SRRKKKRHCSQ).

Belongs to the NUT family.

This is NUT family member 2F (NUTM2F) from Homo sapiens (Human).